The sequence spans 371 residues: MSL complex subunit 3B (371 aa).

Disordered stretches follow at residues 1–47 (MATL…DERA) and 160–230 (EERA…PQAK). Residues 8-47 (PKDDGEGKDEGGSDRGDGDSKPKGKKEVEPHTRREADERA) are compositionally biased toward basic and acidic residues. Positions 44–367 (DERAMRIPIP…CEAHYSSKNP (324 aa)) constitute an MRG domain. A compositionally biased stretch (low complexity) spans 183-193 (SESQAVAGPAA). Over residues 206–216 (APRRSTRHSTH) the composition is skewed to basic residues.

The protein resides in the nucleus. Probable non-catalytic component of the MSL histone acetyltransferase complex, a multiprotein complex that mediates the majority of histone H4 acetylation at 'Lys-16' (H4K16ac), an epigenetic mark that prevents chromatin compaction. The sequence is that of MSL complex subunit 3B from Mus musculus (Mouse).